The following is a 473-amino-acid chain: H(+)/Cl(-) exchange transporter ClcA (473 aa).

The Cytoplasmic portion of the chain corresponds to 1 to 32 (MKTDNSTFLAQQIVRLRRRDQIRRLMQRDKTP). A helical membrane pass occupies residues 33-69 (LAILFMAAVVGTLTGLVGVAFEKAVSWVQNMRIGALV). At 70-76 (QVADHAF) the chain is on the periplasmic side. A helical transmembrane segment spans residues 77–100 (LLWPLAFILSALLAMVGYFLVRKF). A Selectivity filter part_1 motif is present at residues 106-110 (GSGIP). Ser107 lines the chloride pocket. Residues 109–116 (IPEIEGAL) constitute an intramembrane region (helical). The Cytoplasmic segment spans residues 117-123 (EELRPVR). The next 2 helical transmembrane spans lie at 124 to 141 (WWRV…TLGA) and 148 to 166 (EGPT…LDVF). The Selectivity filter part_2 motif lies at 146–150 (GREGP). Over 167 to 176 (RMRSAEARHT) the chain is Cytoplasmic. 2 intramembrane regions (helical) span residues 177 to 189 (LLAT…LSAA) and 193 to 201 (PLAGILFII). Residues 202–214 (EEMRPQFRYNLIS) lie on the Cytoplasmic side of the membrane. Residues 215–232 (IKAVFTGVIMSSIVFRIF) form a helical membrane-spanning segment. The Periplasmic segment spans residues 233 to 252 (NGEAPIIEVGKLSDAPVNTL). The chain crosses the membrane as a helical span at residues 253 to 281 (WLYLILGIIFGCVGPVFNSLVLRTQDMFQ). At 282–287 (RFHGGE) the chain is on the cytoplasmic side. A helical transmembrane segment spans residues 288-309 (IKKWVLMGGAIGGLCGILGLIE). Residues 310-329 (PEAAGGGFNLIPIAAAGNFS) lie on the Periplasmic side of the membrane. 2 helical membrane-spanning segments follow: residues 330 to 349 (VGLL…LCFS) and 355 to 376 (GIFA…MAAA). Positions 355 to 359 (GIFAP) match the Selectivity filter part_3 motif. Chloride is bound by residues Ile356 and Phe357. At 377-386 (VLFPQYHLEA) the chain is on the periplasmic side. Residues 387–401 (GTFAIAGMGALMAAS) constitute an intramembrane region (helical). The segment at residues 402–404 (VRA) is an intramembrane region (note=Loop between two helices). The helical intramembrane region spans 405–416 (PLTGIVLVLEMT). Positions 417 to 421 (DNYQL) form an intramembrane region, note=Loop between two helices. Residues 422–438 (ILPMIITCLGATLLAQF) form a helical membrane-spanning segment. At 439–473 (LGGKPLYSTILARTLAKQDAEQAAKNQNAPAGENT) the chain is on the cytoplasmic side. Position 445 (Tyr445) interacts with chloride.

This sequence belongs to the chloride channel (TC 2.A.49) family. ClcA subfamily. In terms of assembly, homodimer.

It is found in the cell inner membrane. The enzyme catalyses 2 chloride(in) + H(+)(out) = 2 chloride(out) + H(+)(in). Its function is as follows. Proton-coupled chloride transporter. Functions as antiport system and exchanges two chloride ions for 1 proton. Probably acts as an electrical shunt for an outwardly-directed proton pump that is linked to amino acid decarboxylation, as part of the extreme acid resistance (XAR) response. This Salmonella schwarzengrund (strain CVM19633) protein is H(+)/Cl(-) exchange transporter ClcA.